We begin with the raw amino-acid sequence, 859 residues long: MNGLCCCTPCKPRYRRLVDSIYPRAVTDGLLYSNMQKLTFYAISHPEKLERIGEYLVMRMVRDLSRQRPVQVKIAVEAMDQLLQACHSSPSLPQFSENHLRMVQRLLESNNAKMEQLATDSFVTFSNIEESSPSYHRQYDFFIDKFSQMCHANPQAAYGDDFRLARCAGLRGLRGVVWKSVTDDLHPNIWEQQHMDKIVPSILFNLQEPDDSGKGFSSSQIPKFDNTFADSTQSHRVDDEATPKVLSDRCLRELMGKASFGSLRAVIEPVLKHMDLHKRWTPPPSFAIHVFRAIIYSIQSQNSYFVIQELINHLDSMCSADASTRIGIATVLSSIVSIAGTSIGPLLLSIFNSLLKHLRTSVDFERSGKCSDQPAEKMYQEALINAMGDFANALPDYQKVEMMMFTVGNIPNLDERKSKQGDEFLQHVLVKTLLKVATKYRTAYLATVFTDSFLDTLLLLALVRDPQVRLATQQIFHTLLDRHDNAANLVHLGYELDVSDVQLTVEKCSRADQMFMRKHIGEITYMLLRAVALADENDLNKHIDAVLCTMSLLCIESLIELFRLSLALQQLALDSKQNFSDAKRNCIHNMVAKYLNLSAQLIANPSLCQQVQHVVSCRAQRGIPGLNLLLNVKDSPNNDDPLSSSALNSTSQGATTITEEDQTLLFNAEDIAESLKASGKDATRLFVPFNFNMNGRKNDGSGDQWQNDTPNFDSTDGRESPSGYKTVGIDDVSVDMSVDWTPPVSRKQSRRNTIFSIVNPPKLNASTVDDLKAYANATFDPIEEGRKEKELTGSILSEIRNTDFEERVNTNESLNEKSDLSKSIARLLVRNGEMTRVRDIGRPAKPKNLFEIELPSFAY.

Residues 696–714 show a composition bias toward polar residues; that stretch reads RKNDGSGDQWQNDTPNFDS. A disordered region spans residues 696-728; sequence RKNDGSGDQWQNDTPNFDSTDGRESPSGYKTVG.

This sequence belongs to the EFR3 family.

In Caenorhabditis elegans, this protein is Protein EFR3 homolog.